Consider the following 681-residue polypeptide: Methionine--tRNA ligase (681 aa).

The short motif at 14–24 (PYANGSIHLGH) is the 'HIGH' region element. Residues C145, C148, C158, and C161 each contribute to the Zn(2+) site. The 'KMSKS' region signature appears at 331–335 (KMSKS). K334 serves as a coordination point for ATP. The tRNA-binding domain maps to 579–681 (TFAAVDLRVA…SGAKPGQRIK (103 aa)).

Belongs to the class-I aminoacyl-tRNA synthetase family. MetG type 1 subfamily. Homodimer. Zn(2+) serves as cofactor.

It is found in the cytoplasm. It catalyses the reaction tRNA(Met) + L-methionine + ATP = L-methionyl-tRNA(Met) + AMP + diphosphate. Its function is as follows. Is required not only for elongation of protein synthesis but also for the initiation of all mRNA translation through initiator tRNA(fMet) aminoacylation. In Pseudomonas putida (strain W619), this protein is Methionine--tRNA ligase.